The following is a 432-amino-acid chain: MTELISIRESSKHVDEEVRMHVWLTDKRSSGKIVFLQLRDGTAFFQGVVRKNDVSEEVFEAAKGLRQEASFYLTGTIHEDARSHFGYEIQISDLEVVSNNEGYPITNKEHGIDFLLDHRHLWLRSRRPFAIMQIRNRIFKATVDFFENEGFVKFDAPLLMHSAPEGTTELFHIDYFNHDAYLSQSGQLYGEVGAEAFGKIFTFGPTFRAEASKTRRHLTEFWMMEPEMAWMHQDESLDLQERFLSYVVGQVLEHCEYELSILGRDVDKLRPAAEGNYTRLSYDDAVKMLQEAGKDFKWGDDFGAPDEAFLSEQFDRPFFIVNYPVAIKPFYMKKNPENPLTYLCADVEAPEGYGEIMGGSEREADYDTLKAQIEEAGLNLDDYSWYLDLRKYGSVPHSGFGMGFERVIAWICKLDHVREAVPFPRMINRMQP.

The protein belongs to the class-II aminoacyl-tRNA synthetase family. As to quaternary structure, homodimer.

Its subcellular location is the cytoplasm. It carries out the reaction tRNA(Asn) + L-asparagine + ATP = L-asparaginyl-tRNA(Asn) + AMP + diphosphate + H(+). This Lactobacillus delbrueckii subsp. bulgaricus (strain ATCC 11842 / DSM 20081 / BCRC 10696 / JCM 1002 / NBRC 13953 / NCIMB 11778 / NCTC 12712 / WDCM 00102 / Lb 14) protein is Asparagine--tRNA ligase.